A 297-amino-acid polypeptide reads, in one-letter code: Mitochondrial substrate carrier family protein P (297 aa).

Solcar repeat units lie at residues 12-98 (KPSW…IKNH), 104-189 (SSSF…LKRI), and 201-293 (ISGT…LSNF). Transmembrane regions (helical) follow at residues 15-35 (WVSFLSGGLAGVTAKSAVAPL), 66-86 (GIKGLWRGNSATILRVFPYAA), 107-127 (FQIFLAGSAAGGIAVCATYPL), 165-185 (IQPTLIGILPYGGISFSTFEF), 207-227 (LIAGGIAGGVAQTVAYPFDVV), and 262-282 (ILALYKGLSINYVKVIPTASI).

It belongs to the mitochondrial carrier (TC 2.A.29) family.

It is found in the mitochondrion inner membrane. Mitochondrial solute carriers shuttle metabolites, nucleotides, and cofactors through the mitochondrial inner membrane. Required for the accumulation of coenzyme A in the mitochondrial matrix. This is Mitochondrial substrate carrier family protein P (mcfP) from Dictyostelium discoideum (Social amoeba).